The primary structure comprises 50 residues: Large ribosomal subunit protein bL33 (50 aa).

It belongs to the bacterial ribosomal protein bL33 family.

The polypeptide is Large ribosomal subunit protein bL33 (Koribacter versatilis (strain Ellin345)).